Consider the following 338-residue polypeptide: Anthranilate phosphoribosyltransferase (338 aa).

Residues Gly-78, 81-82, Ser-86, 88-91, 106-114, and Ser-118 each bind 5-phospho-alpha-D-ribose 1-diphosphate; these read GD, NIST, and KHGNKSITS. Position 78 (Gly-78) interacts with anthranilate. Position 90 (Ser-90) interacts with Mg(2+). Asn-109 contacts anthranilate. Arg-163 contributes to the anthranilate binding site. Residues Asp-222 and Glu-223 each contribute to the Mg(2+) site.

Belongs to the anthranilate phosphoribosyltransferase family. In terms of assembly, homodimer. Mg(2+) is required as a cofactor.

The catalysed reaction is N-(5-phospho-beta-D-ribosyl)anthranilate + diphosphate = 5-phospho-alpha-D-ribose 1-diphosphate + anthranilate. Its pathway is amino-acid biosynthesis; L-tryptophan biosynthesis; L-tryptophan from chorismate: step 2/5. Catalyzes the transfer of the phosphoribosyl group of 5-phosphorylribose-1-pyrophosphate (PRPP) to anthranilate to yield N-(5'-phosphoribosyl)-anthranilate (PRA). This chain is Anthranilate phosphoribosyltransferase, found in Staphylococcus carnosus (strain TM300).